We begin with the raw amino-acid sequence, 533 residues long: Laccase-2 (533 aa).

The first 23 residues, 1–23, serve as a signal peptide directing secretion; the sequence is MFPGARILATLTLALHLLHGAHA. 3 Plastocyanin-like domains span residues 25–171, 173–336, and 382–501; these read IGPA…LSLY, IDNA…LETN, and TAPV…FAED. 4 residues coordinate Cu cation: His-98, His-100, His-143, and His-145. 2 disulfides stabilise this stretch: Cys-119–Cys-516 and Cys-151–Cys-238. Residues His-427, His-430, and His-432 each contribute to the Cu cation site. A glycan (N-linked (GlcNAc...) (high mannose) asparagine) is linked at Asn-467. Residues His-483, Cys-484, His-485, and His-489 each contribute to the Cu cation site.

This sequence belongs to the multicopper oxidase family. Cu cation is required as a cofactor. Post-translationally, N-glycosylated at Asn-467; contains a high-mannose glycan with a varying number of mannose residues.

The protein localises to the secreted. The enzyme catalyses 4 hydroquinone + O2 = 4 benzosemiquinone + 2 H2O. Functionally, lignin degradation and detoxification of lignin-derived products. The protein is Laccase-2 (POX2) of Pleurotus ostreatus (Oyster mushroom).